The following is a 199-amino-acid chain: Single-stranded DNA-binding protein 2 (199 aa).

An SSB domain is found at 1–110 (MAGETVITVV…LDVDEVGASL (110 aa)). The disordered stretch occupies residues 114–199 (TAKVTKTSGQ…GGGYSDEPPF (86 aa)). Over residues 123 to 156 (QGRGGQGGYGGGGGGQGGGGWGGGPGGGQQGGGA) the composition is skewed to gly residues. Positions 157–166 (PADDPWATGG) are enriched in low complexity. Gly residues predominate over residues 167 to 193 (APAGGQQGGGGQGGGGWGGGSGGGGGY).

In terms of assembly, homotetramer. Phosphorylated on tyrosine residue(s) when expressed in E.coli.

The protein resides in the cytoplasm. It localises to the nucleoid. The sequence is that of Single-stranded DNA-binding protein 2 (ssb2) from Streptomyces coelicolor (strain ATCC BAA-471 / A3(2) / M145).